The primary structure comprises 288 residues: 4-diphosphocytidyl-2-C-methyl-D-erythritol kinase (288 aa).

Lys-8 is an active-site residue. Residue 92-102 coordinates ATP; sequence PVAAGMAGGST. The active site involves Asp-134.

The protein belongs to the GHMP kinase family. IspE subfamily.

It carries out the reaction 4-CDP-2-C-methyl-D-erythritol + ATP = 4-CDP-2-C-methyl-D-erythritol 2-phosphate + ADP + H(+). Its pathway is isoprenoid biosynthesis; isopentenyl diphosphate biosynthesis via DXP pathway; isopentenyl diphosphate from 1-deoxy-D-xylulose 5-phosphate: step 3/6. Its function is as follows. Catalyzes the phosphorylation of the position 2 hydroxy group of 4-diphosphocytidyl-2C-methyl-D-erythritol. This Clostridium perfringens (strain SM101 / Type A) protein is 4-diphosphocytidyl-2-C-methyl-D-erythritol kinase.